A 259-amino-acid polypeptide reads, in one-letter code: Glandular kallikrein-10 (259 aa).

An N-terminal signal peptide occupies residues 1–18 (MWFLILFLALSLGGIDAA). A propeptide spans 19 to 24 (PPGQSR) (activation peptide). Positions 25–256 (IVGGYKCEKN…FTSWIKEVMK (232 aa)) constitute a Peptidase S1 domain. 5 disulfides stabilise this stretch: cysteine 31-cysteine 171, cysteine 48-cysteine 64, cysteine 150-cysteine 217, cysteine 182-cysteine 196, and cysteine 207-cysteine 232. The Charge relay system role is filled by histidine 63. N-linked (GlcNAc...) asparagine glycans are attached at residues asparagine 91 and asparagine 106. Catalysis depends on aspartate 118, which acts as the Charge relay system. Serine 211 (charge relay system) is an active-site residue.

It belongs to the peptidase S1 family. Kallikrein subfamily. As to quaternary structure, heterodimer of a light chain and heavy chain linked by a disulfide bond. In terms of processing, probably N- and O-glycosylated. Kidney and submandibular gland, where it is found in the granular convoluted tubule and striated duct cells. It is likely that the enzyme is mainly synthesized in the granular convoluted tubules and then transferred to other tissues by release into the vasculature or interstitial space.

It catalyses the reaction Preferential cleavage of Arg-|-Xaa bonds in small molecule substrates. Highly selective action to release kallidin (lysyl-bradykinin) from kininogen involves hydrolysis of Met-|-Xaa or Leu-|-Xaa.. Its function is as follows. Glandular kallikreins cleave Met-Lys and Arg-Ser bonds in kininogen to release Lys-bradykinin. This protein may be involved in the regulation of renal function. This Rattus norvegicus (Rat) protein is Glandular kallikrein-10 (Klk10).